The chain runs to 496 residues: MARQKIESDIVLIGAGIMSATLGLLLKELNPKLKIEIFERLDIAAAESSDAWNNAGTGHAAFCELNYTPELEDGTIETKKALKISEAFEVSRQLWTYLVEKGLLQNPENFIKSVPHMSLVWGNDNVEYLRKRFEALQQFHLFKTMEFSDNIEKIKEWAPLVMENRNSKDKIAATSMKLGTDVNFGTLTRNMFKYLETLEGVTMHFNHDVYGLKKREDGRWRAKVKNIATGEKKKIFAPFVFIGAGGGSLLLLEKANIPEGQGFGGFPVSGQWLKCTNPEVIQKHSAKVYGKASVGAPPMSVPHIDTRMIDGKKALLFGPYAGFSTKFLKNGSYFDLIKSIEFSNIKPMLGAGVKNIPLTKYLIEQVIQSSDDRLKALKEYVPSAKKEDWVLENAGQRVQVIKKDKDGHGILEFGTEVVTAHDGSLAVLLGASPGASTAVQIMVDLITKCFPEEVKTTIWQNKLKEMIPSYGQSLNENTVLCDQIRAKTNEILKLKV.

Belongs to the MQO family. Requires FAD as cofactor.

The catalysed reaction is (S)-malate + a quinone = a quinol + oxaloacetate. It participates in carbohydrate metabolism; tricarboxylic acid cycle; oxaloacetate from (S)-malate (quinone route): step 1/1. This chain is Probable malate:quinone oxidoreductase, found in Flavobacterium psychrophilum (strain ATCC 49511 / DSM 21280 / CIP 103535 / JIP02/86).